Here is a 256-residue protein sequence, read N- to C-terminus: Beta-fibrinogenase-like (256 aa).

The N-terminal stretch at 1–18 is a signal peptide; the sequence is MVLIKVLANLLVLQLSYA. Residues 19 to 24 constitute a propeptide that is removed on maturation; sequence QKSSEL. In terms of domain architecture, Peptidase S1 spans 25-247; sequence VVGGDECNIN…YTDWIQSIIA (223 aa). Cystine bridges form between cysteine 31–cysteine 161, cysteine 49–cysteine 65, cysteine 96–cysteine 254, cysteine 140–cysteine 208, cysteine 172–cysteine 187, and cysteine 198–cysteine 223. Asparagine 44 carries an N-linked (GlcNAc...) asparagine glycan. Histidine 64 (charge relay system) is an active-site residue. N-linked (GlcNAc...) asparagine glycans are attached at residues asparagine 78 and asparagine 101. Aspartate 108 functions as the Charge relay system in the catalytic mechanism. N-linked (GlcNAc...) asparagine glycosylation is present at asparagine 152. The active-site Charge relay system is serine 202.

The protein belongs to the peptidase S1 family. Snake venom subfamily. Monomer. As to expression, expressed by the venom gland.

It localises to the secreted. Snake venom serine protease that has fibrinogenolytic activities by hydrolyzing the beta chain of fibrinogen (FGB). Typical arginine esterase which hydrolyzes esters and amides of arginine. This Daboia siamensis (Eastern Russel's viper) protein is Beta-fibrinogenase-like.